The primary structure comprises 97 residues: Putative defensin-like protein 227 (97 aa).

The first 26 residues, 1–26 (MKWATLFMVSCVLMFFVMNNINEVES), serve as a signal peptide directing secretion. Disulfide bonds link Cys-35/Cys-97, Cys-45/Cys-76, Cys-53/Cys-91, and Cys-74/Cys-93.

The protein belongs to the DEFL family.

It is found in the secreted. In Arabidopsis thaliana (Mouse-ear cress), this protein is Putative defensin-like protein 227 (SCRL28).